Here is a 124-residue protein sequence, read N- to C-terminus: MSFDVPDDLQYLESHEWIDPATGRVGISEFAQDELGDVVFVELPSVGDALDQHDELGVVESIKAVSDLYAPVSGEVTAVNDALTNEPELVNEAPFGDGWLVEIDFDSDDLEATLDSDDYRAQIA.

One can recognise a Lipoyl-binding domain in the interval 22-104 (TGRVGISEFA…FGDGWLVEID (83 aa)). Lys63 carries the N6-lipoyllysine modification.

This sequence belongs to the GcvH family. The glycine cleavage system is composed of four proteins: P, T, L and H. It depends on (R)-lipoate as a cofactor.

Its function is as follows. The glycine cleavage system catalyzes the degradation of glycine. The H protein shuttles the methylamine group of glycine from the P protein to the T protein. The chain is Probable glycine cleavage system H protein from Halobacterium salinarum (strain ATCC 700922 / JCM 11081 / NRC-1) (Halobacterium halobium).